The primary structure comprises 583 residues: Phosphoglucomutase, cytoplasmic (583 aa).

Residues 1–20 (MATFKVSRVETKPYDGQKPG) are disordered. Positions 25 and 124 each coordinate alpha-D-glucose 1,6-bisphosphate. Ser-124 serves as the catalytic Phosphoserine intermediate. Residues Ser-124, Asp-300, Asp-302, and Asp-304 each contribute to the Mg(2+) site. Ser-124 carries the phosphoserine modification. The alpha-D-glucose 1,6-bisphosphate site is built by Asp-304, Arg-305, Thr-368, Glu-387, Ser-389, and Lys-400.

It belongs to the phosphohexose mutase family. Monomer. The cofactor is Mg(2+).

The protein resides in the cytoplasm. It catalyses the reaction alpha-D-glucose 1-phosphate = alpha-D-glucose 6-phosphate. The enzyme catalyses O-phospho-L-seryl-[protein] + alpha-D-glucose 1-phosphate = alpha-D-glucose 1,6-bisphosphate + L-seryl-[protein]. The catalysed reaction is alpha-D-glucose 1,6-bisphosphate + L-seryl-[protein] = O-phospho-L-seryl-[protein] + alpha-D-glucose 6-phosphate. Functionally, catalyzes the reversible isomerization of alpha-D-glucose 1-phosphate to alpha-D-glucose 6-phosphate. The mechanism proceeds via the intermediate compound alpha-D-glucose 1,6-bisphosphate. This enzyme participates in both the breakdown and synthesis of glucose. The protein is Phosphoglucomutase, cytoplasmic (PGM1) of Mesembryanthemum crystallinum (Common ice plant).